Consider the following 637-residue polypeptide: MIESNDYEQERLKNIRENERLMKELGVMGGSSTIGGPSSKRTTPTKPKKQATPKKKPDTTPTRIMPSRSSARLAGHEADSETLKRKYEEEAEEARKVAEAAKRARHQPFDLSGMTGGELEEEAIMALESTLQGLANNTSSAAELVDTKDENKRRSANKPDPQFSTERRELEDILNKMTLKSAAKVTPKRIYSMAYHPSTDKDLVFVGDKEGSIGVWDAAPVAFASNRNGVKTADDQDEDAEERFPEGKAWTLQVHARSPVTCIKFDPVNHNSVLSSSYDSTVRKLDLATAKSEEIWAGEEDVLLSIFDVLSPSTHPSVYMDTPNPSLDERSMWIADHRGGLLHIDLRERTRRGNNTRRWQVCEKKIGAMSVNRLAPHCIATASLDQHIRLFDVRALASVVKQTADAPYNYKGVDADDLESAQTKAQFASSKARQACTSVDFSPRGDQLVGVSYDDVVKVWSMEPGSLFSEHGLKNRIATAKSNKPKGAVKKQVPDSASDTGPGLLSWLSRATPLGTKKDVAEAIKQEQDAPSPSLSKRPDDVLANPTRIPHNNQTGKWLTLFRAKWNQNALLEPHFTIGSMSRRAEVYAADGTLLRSLWDENLVTAVPAVTCMHPVLPARLVTGNASGRCTFWSPDP.

2 disordered regions span residues 1–91 and 144–168; these read MIES…EEEA and LVDTKDENKRRSANKPDPQFSTERR. Composition is skewed to basic and acidic residues over residues 8–23 and 74–91; these read EQERLKNIRENERLMK and AGHEADSETLKRKYEEEA. WD repeat units follow at residues 185-226, 255-295, 297-321, 361-401, and 431-470; these read VTPK…FASN, HARS…SEEI, AGEEDVLLSIFDVLSPSTHPSVYMD, VCEK…SVVK, and KARQACTSVDFSPRGDQLVGVSYDDVVKVWSMEPGSLFSE. Disordered stretches follow at residues 482 to 508 and 525 to 549; these read SNKPKGAVKKQVPDSASDTGPGLLSWL and KQEQDAPSPSLSKRPDDVLANPTRI. WD repeat units lie at residues 556–598 and 602–637; these read GKWL…LRSL and NLVTAVPAVTCMHPVLPARLVTGNASGRCTFWSPDP.

The protein belongs to the WD repeat DDB2/WDR76 family.

DNA-binding protein that binds to both single- and double-stranded DNA. Binds preferentially to UV-damaged DNA. May be involved in DNA-metabolic processes. This Mycosarcoma maydis (Corn smut fungus) protein is DNA damage-binding protein CMR1.